A 261-amino-acid chain; its full sequence is tRNA pseudouridine synthase A (261 aa).

The active-site Nucleophile is D51. Y109 is a binding site for substrate.

Belongs to the tRNA pseudouridine synthase TruA family. In terms of assembly, homodimer.

The enzyme catalyses uridine(38/39/40) in tRNA = pseudouridine(38/39/40) in tRNA. Formation of pseudouridine at positions 38, 39 and 40 in the anticodon stem and loop of transfer RNAs. This chain is tRNA pseudouridine synthase A, found in Shewanella sp. (strain ANA-3).